We begin with the raw amino-acid sequence, 466 residues long: Ribulose bisphosphate carboxylase large chain (466 aa).

Residue Lys5 is modified to N6,N6,N6-trimethyllysine. Substrate contacts are provided by Asn114 and Thr164. The Proton acceptor role is filled by Lys166. Lys168 contacts substrate. 3 residues coordinate Mg(2+): Lys192, Asp194, and Glu195. Lys192 is modified (N6-carboxylysine). Catalysis depends on His285, which acts as the Proton acceptor. Positions 286, 318, and 370 each coordinate substrate.

It belongs to the RuBisCO large chain family. Type I subfamily. In terms of assembly, heterohexadecamer of 8 large chains and 8 small chains. Mg(2+) is required as a cofactor.

Its subcellular location is the plastid. It is found in the chloroplast. The enzyme catalyses 2 (2R)-3-phosphoglycerate + 2 H(+) = D-ribulose 1,5-bisphosphate + CO2 + H2O. It catalyses the reaction D-ribulose 1,5-bisphosphate + O2 = 2-phosphoglycolate + (2R)-3-phosphoglycerate + 2 H(+). Functionally, ruBisCO catalyzes two reactions: the carboxylation of D-ribulose 1,5-bisphosphate, the primary event in carbon dioxide fixation, as well as the oxidative fragmentation of the pentose substrate in the photorespiration process. Both reactions occur simultaneously and in competition at the same active site. This Cornus kousa (Kousa dogwood) protein is Ribulose bisphosphate carboxylase large chain.